Reading from the N-terminus, the 177-residue chain is Large ribosomal subunit protein uL10 (177 aa).

This sequence belongs to the universal ribosomal protein uL10 family. As to quaternary structure, part of the ribosomal stalk of the 50S ribosomal subunit. The N-terminus interacts with L11 and the large rRNA to form the base of the stalk. The C-terminus forms an elongated spine to which L12 dimers bind in a sequential fashion forming a multimeric L10(L12)X complex.

Forms part of the ribosomal stalk, playing a central role in the interaction of the ribosome with GTP-bound translation factors. The chain is Large ribosomal subunit protein uL10 from Xanthomonas campestris pv. campestris (strain 8004).